A 116-amino-acid chain; its full sequence is Phosphoribosyl-AMP cyclohydrolase (116 aa).

Asp82 contributes to the Mg(2+) binding site. Cys83 lines the Zn(2+) pocket. Residues Asp84 and Asp86 each coordinate Mg(2+). The Zn(2+) site is built by Cys99 and Cys106.

It belongs to the PRA-CH family. In terms of assembly, homodimer. It depends on Mg(2+) as a cofactor. Zn(2+) serves as cofactor.

It is found in the cytoplasm. The catalysed reaction is 1-(5-phospho-beta-D-ribosyl)-5'-AMP + H2O = 1-(5-phospho-beta-D-ribosyl)-5-[(5-phospho-beta-D-ribosylamino)methylideneamino]imidazole-4-carboxamide. It participates in amino-acid biosynthesis; L-histidine biosynthesis; L-histidine from 5-phospho-alpha-D-ribose 1-diphosphate: step 3/9. Catalyzes the hydrolysis of the adenine ring of phosphoribosyl-AMP. The protein is Phosphoribosyl-AMP cyclohydrolase of Saccharopolyspora erythraea (strain ATCC 11635 / DSM 40517 / JCM 4748 / NBRC 13426 / NCIMB 8594 / NRRL 2338).